A 228-amino-acid polypeptide reads, in one-letter code: Superoxide dismutase [Mn] (228 aa).

The N-terminal stretch at 1–23 (MTRSLKTTLILLASSVISMSALA) is a signal peptide. Residues His49, His100, Asp188, and His192 each coordinate Mn(2+).

The protein belongs to the iron/manganese superoxide dismutase family. The cofactor is Mn(2+).

It is found in the periplasm. The catalysed reaction is 2 superoxide + 2 H(+) = H2O2 + O2. Destroys superoxide anion radicals which are normally produced within the cells and which are toxic to biological systems. The protein is Superoxide dismutase [Mn] (sodA) of Acinetobacter baylyi (strain ATCC 33305 / BD413 / ADP1).